Reading from the N-terminus, the 250-residue chain is Ferritin, chloroplastic (250 aa).

Residues 1–49 constitute a chloroplast transit peptide; that stretch reads MALAPSKVSTFSGFSPKPSVGGAQKNPTCSVSLSFLNEKLGSRNLRVCA. The tract at residues 50-82 is extension peptide (EP); the sequence is STVPLTGVIFEPFEEVKKSELAVPTAPQVSLAR. Positions 83–236 constitute a Ferritin-like diiron domain; sequence QNYADECESA…EYVAQLRRVG (154 aa). E100, E135, H138, E184, and Q218 together coordinate Fe cation.

The protein belongs to the ferritin family. As to quaternary structure, oligomer of 24 subunits. There are two types of subunits: L (light) chain and H (heavy) chain. The major chain can be light or heavy, depending on the species and tissue type. The functional molecule forms a roughly spherical shell with a diameter of 12 nm and contains a central cavity into which the insoluble mineral iron core is deposited.

It is found in the plastid. The protein resides in the chloroplast. It carries out the reaction 4 Fe(2+) + O2 + 4 H(+) = 4 Fe(3+) + 2 H2O. In terms of biological role, stores iron in a soluble, non-toxic, readily available form. Important for iron homeostasis. Has ferroxidase activity. Iron is taken up in the ferrous form and deposited as ferric hydroxides after oxidation. In Malus baccata var. xiaojinensis (Apple), this protein is Ferritin, chloroplastic.